A 289-amino-acid polypeptide reads, in one-letter code: GTPase Era (289 aa).

The Era-type G domain occupies lysine 2 to glutamate 167. Residues glycine 10 to serine 17 are G1. A GTP-binding site is contributed by glycine 10–serine 17. The segment at asparagine 36 to arginine 40 is G2. Residues aspartate 57–glycine 60 form a G3 region. Residues aspartate 57–leucine 61 and threonine 116–aspartate 119 contribute to the GTP site. The tract at residues threonine 116–aspartate 119 is G4. The G5 stretch occupies residues phenylalanine 146–threonine 148. Positions isoleucine 194–lysine 274 constitute a KH type-2 domain.

It belongs to the TRAFAC class TrmE-Era-EngA-EngB-Septin-like GTPase superfamily. Era GTPase family. As to quaternary structure, monomer.

The protein localises to the cytoplasm. It is found in the cell inner membrane. In terms of biological role, an essential GTPase that binds both GDP and GTP, with rapid nucleotide exchange. Plays a role in 16S rRNA processing and 30S ribosomal subunit biogenesis and possibly also in cell cycle regulation and energy metabolism. This chain is GTPase Era, found in Campylobacter concisus (strain 13826).